Here is a 558-residue protein sequence, read N- to C-terminus: Formate--tetrahydrofolate ligase (558 aa).

Thr-66–Thr-73 lines the ATP pocket.

Belongs to the formate--tetrahydrofolate ligase family.

It carries out the reaction (6S)-5,6,7,8-tetrahydrofolate + formate + ATP = (6R)-10-formyltetrahydrofolate + ADP + phosphate. Its pathway is one-carbon metabolism; tetrahydrofolate interconversion. This is Formate--tetrahydrofolate ligase from Neisseria meningitidis serogroup C / serotype 2a (strain ATCC 700532 / DSM 15464 / FAM18).